A 439-amino-acid chain; its full sequence is Forkhead box protein J1-B (439 aa).

A DNA-binding region (fork-head) is located at residues Lys-124–Leu-218.

The protein belongs to the FOXJ1 family.

It is found in the nucleus. Its function is as follows. Key transcription factor required for motile ciliogenesis. Activates genes essential for motile cilia formation and function. The chain is Forkhead box protein J1-B (foxj1-b) from Xenopus laevis (African clawed frog).